A 376-amino-acid chain; its full sequence is N-acetyldiaminopimelate deacetylase (376 aa).

The active site involves Asp69. The active-site Proton acceptor is the Glu128.

Belongs to the peptidase M20A family. N-acetyldiaminopimelate deacetylase subfamily.

The enzyme catalyses N-acetyl-(2S,6S)-2,6-diaminopimelate + H2O = (2S,6S)-2,6-diaminopimelate + acetate. It participates in amino-acid biosynthesis; L-lysine biosynthesis via DAP pathway; LL-2,6-diaminopimelate from (S)-tetrahydrodipicolinate (acetylase route): step 3/3. In terms of biological role, catalyzes the conversion of N-acetyl-diaminopimelate to diaminopimelate and acetate. The polypeptide is N-acetyldiaminopimelate deacetylase (Streptococcus pneumoniae (strain P1031)).